The primary structure comprises 321 residues: ATP-dependent 6-phosphofructokinase (321 aa).

G12 serves as a coordination point for ATP. Residues 22-26 and 55-60 contribute to the ADP site; these read RAVVR and RYSVSD. ATP is bound by residues 73 to 74 and 103 to 106; these read RF and GDGS. Residue D104 participates in Mg(2+) binding. Residue 127-129 participates in substrate binding; it reads TID. The active-site Proton acceptor is D129. R156 lines the ADP pocket. Residues R164 and 171–173 contribute to the substrate site; that span reads MGR. ADP contacts are provided by residues 187 to 189 and 215 to 217; these read GCE and KRH. Substrate contacts are provided by residues E224, R245, and 251-254; that span reads HVQR.

Belongs to the phosphofructokinase type A (PFKA) family. ATP-dependent PFK group I subfamily. Prokaryotic clade 'B1' sub-subfamily. As to quaternary structure, homotetramer. The cofactor is Mg(2+).

Its subcellular location is the cytoplasm. The catalysed reaction is beta-D-fructose 6-phosphate + ATP = beta-D-fructose 1,6-bisphosphate + ADP + H(+). It participates in carbohydrate degradation; glycolysis; D-glyceraldehyde 3-phosphate and glycerone phosphate from D-glucose: step 3/4. Allosterically activated by ADP and other diphosphonucleosides, and allosterically inhibited by phosphoenolpyruvate. Its function is as follows. Catalyzes the phosphorylation of D-fructose 6-phosphate to fructose 1,6-bisphosphate by ATP, the first committing step of glycolysis. In Actinobacillus succinogenes (strain ATCC 55618 / DSM 22257 / CCUG 43843 / 130Z), this protein is ATP-dependent 6-phosphofructokinase.